We begin with the raw amino-acid sequence, 492 residues long: 3-octaprenyl-4-hydroxybenzoate carboxy-lyase (492 aa).

N177 contributes to the Mn(2+) binding site. Prenylated FMN is bound by residues I180–R182, R194–L196, and R199–G200. E243 is a Mn(2+) binding site. D292 (proton donor) is an active-site residue.

It belongs to the UbiD family. As to quaternary structure, homohexamer. Requires prenylated FMN as cofactor. The cofactor is Mn(2+).

The protein localises to the cell membrane. It catalyses the reaction a 4-hydroxy-3-(all-trans-polyprenyl)benzoate + H(+) = a 2-(all-trans-polyprenyl)phenol + CO2. The protein operates within cofactor biosynthesis; ubiquinone biosynthesis. In terms of biological role, catalyzes the decarboxylation of 3-octaprenyl-4-hydroxy benzoate to 2-octaprenylphenol, an intermediate step in ubiquinone biosynthesis. In Neisseria gonorrhoeae (strain ATCC 700825 / FA 1090), this protein is 3-octaprenyl-4-hydroxybenzoate carboxy-lyase.